A 230-amino-acid polypeptide reads, in one-letter code: 2,3-bisphosphoglycerate-dependent phosphoglycerate mutase (230 aa).

Residues 8–15 (RHGESEWN), 21–22 (TG), arginine 60, 87–90 (ERHY), lysine 98, 114–115 (RR), and 183–184 (GN) each bind substrate. The active-site Tele-phosphohistidine intermediate is histidine 9. The active-site Proton donor/acceptor is glutamate 87.

It belongs to the phosphoglycerate mutase family. BPG-dependent PGAM subfamily.

The catalysed reaction is (2R)-2-phosphoglycerate = (2R)-3-phosphoglycerate. It functions in the pathway carbohydrate degradation; glycolysis; pyruvate from D-glyceraldehyde 3-phosphate: step 3/5. Its function is as follows. Catalyzes the interconversion of 2-phosphoglycerate and 3-phosphoglycerate. This is 2,3-bisphosphoglycerate-dependent phosphoglycerate mutase from Streptococcus agalactiae serotype Ia (strain ATCC 27591 / A909 / CDC SS700).